Here is a 376-residue protein sequence, read N- to C-terminus: Chaperone protein DnaJ (376 aa).

Positions 4–68 (DYYQLLGVAR…ETRARYDQFG (65 aa)) constitute a J domain. A CR-type zinc finger spans residues 135 to 217 (GGEKEIRVTH…CGGAGRLRRP (83 aa)). 8 residues coordinate Zn(2+): cysteine 148, cysteine 151, cysteine 165, cysteine 168, cysteine 191, cysteine 194, cysteine 205, and cysteine 208. CXXCXGXG motif repeat units follow at residues 148 to 155 (CGTCQGSG), 165 to 172 (CTTCGGAG), 191 to 198 (CPTCEGSG), and 205 to 212 (CDDCGGAG).

This sequence belongs to the DnaJ family. Homodimer. It depends on Zn(2+) as a cofactor.

Its subcellular location is the cytoplasm. In terms of biological role, participates actively in the response to hyperosmotic and heat shock by preventing the aggregation of stress-denatured proteins and by disaggregating proteins, also in an autonomous, DnaK-independent fashion. Unfolded proteins bind initially to DnaJ; upon interaction with the DnaJ-bound protein, DnaK hydrolyzes its bound ATP, resulting in the formation of a stable complex. GrpE releases ADP from DnaK; ATP binding to DnaK triggers the release of the substrate protein, thus completing the reaction cycle. Several rounds of ATP-dependent interactions between DnaJ, DnaK and GrpE are required for fully efficient folding. Also involved, together with DnaK and GrpE, in the DNA replication of plasmids through activation of initiation proteins. The protein is Chaperone protein DnaJ of Synechococcus sp. (strain ATCC 27144 / PCC 6301 / SAUG 1402/1) (Anacystis nidulans).